A 504-amino-acid polypeptide reads, in one-letter code: ATP synthase subunit alpha 1 (504 aa).

Glycine 172–threonine 179 is a binding site for ATP.

The protein belongs to the ATPase alpha/beta chains family. As to quaternary structure, F-type ATPases have 2 components, CF(1) - the catalytic core - and CF(0) - the membrane proton channel. CF(1) has five subunits: alpha(3), beta(3), gamma(1), delta(1), epsilon(1). CF(0) has three main subunits: a(1), b(2) and c(9-12). The alpha and beta chains form an alternating ring which encloses part of the gamma chain. CF(1) is attached to CF(0) by a central stalk formed by the gamma and epsilon chains, while a peripheral stalk is formed by the delta and b chains.

It localises to the cell inner membrane. The enzyme catalyses ATP + H2O + 4 H(+)(in) = ADP + phosphate + 5 H(+)(out). Functionally, produces ATP from ADP in the presence of a proton gradient across the membrane. The alpha chain is a regulatory subunit. The chain is ATP synthase subunit alpha 1 from Rhodopirellula baltica (strain DSM 10527 / NCIMB 13988 / SH1).